We begin with the raw amino-acid sequence, 665 residues long: Probable potassium transport system protein Kup 2 (665 aa).

13 helical membrane-spanning segments follow: residues 13 to 33, 55 to 75, 98 to 118, 138 to 158, 167 to 187, 195 to 215, 217 to 237, 250 to 270, 295 to 315, 344 to 364, 375 to 395, 400 to 420, and 428 to 448; these read GLLV…LYVM, ISLI…LIAL, WLVL…TLTP, IPVP…LFLF, IIGK…GLTG, LSLL…SPAN, VGVL…ALYS, SWPY…VWIL, FFAI…LITG, IFIP…VFLF, GLAI…YLSL, ILLR…FLIS, and GGYV…IWYF.

Belongs to the HAK/KUP transporter (TC 2.A.72) family.

Its subcellular location is the cell membrane. It catalyses the reaction K(+)(in) + H(+)(in) = K(+)(out) + H(+)(out). Its function is as follows. Transport of potassium into the cell. Likely operates as a K(+):H(+) symporter. This is Probable potassium transport system protein Kup 2 from Lactobacillus johnsonii (strain CNCM I-12250 / La1 / NCC 533).